The chain runs to 374 residues: MSDNSQKKVIVGMSGGVDSSVSAYLLKQQGYQVEGLFMKNWEEDDDSEYCTAAEDLADAQAVCDKLGIHLHKINFASEYWDNVFEYFLAEYKAGRTPNPDILCNKEIKFKAFLEFADEVLDADYIAMGHYVRRSFPENGEKPQMLRGLDGNKDQSYFLYTLSHEQVARSLFPVGDLEKPEVRRIAEEQGLITAKKKDSTGICFIGERKFTDFLSRYLPAQPGNIESPEGEVLGQHQGLMYHTLGQRKGLHIGGRKGGGGNEEPWFVAEKDLKRNVLIAVQGQDHPMLKSEGLIASQLHWVEREPIRDVVKCTVKTRYRQQDIPCTIIPIDDENIKVIFDEPEIAVTPGQSAVFYQGDVCLGGGIIEKRIKYTQA.

Residues 12-19 (GMSGGVDS) and Met38 each bind ATP. Residues 98–100 (NPD) are interaction with target base in tRNA. The active-site Nucleophile is Cys103. A disulfide bridge links Cys103 with Cys202. Gly128 provides a ligand contact to ATP. The interaction with tRNA stretch occupies residues 152 to 154 (KDQ). Residue Cys202 is the Cysteine persulfide intermediate of the active site. An interaction with tRNA region spans residues 316-317 (RY).

The protein belongs to the MnmA/TRMU family.

It is found in the cytoplasm. It catalyses the reaction S-sulfanyl-L-cysteinyl-[protein] + uridine(34) in tRNA + AH2 + ATP = 2-thiouridine(34) in tRNA + L-cysteinyl-[protein] + A + AMP + diphosphate + H(+). Its function is as follows. Catalyzes the 2-thiolation of uridine at the wobble position (U34) of tRNA, leading to the formation of s(2)U34. The chain is tRNA-specific 2-thiouridylase MnmA from Vibrio vulnificus (strain CMCP6).